Here is a 259-residue protein sequence, read N- to C-terminus: Kallikrein 1-related peptidase b22 (259 aa).

The first 17 residues, 1-17 (MRFLILFLTLSLGGIDA), serve as a signal peptide directing secretion. The propeptide at 18–24 (APPVQSR) is activation peptide. Residues 25–256 (ILGGFKCEKN…FTSWIKDTMA (232 aa)) form the Peptidase S1 domain. Intrachain disulfides connect Cys-31–Cys-171, Cys-50–Cys-66, Cys-150–Cys-217, Cys-182–Cys-196, and Cys-207–Cys-232. Residue His-65 is the Charge relay system of the active site. The N-linked (GlcNAc...) asparagine glycan is linked to Asn-102. The active-site Charge relay system is the Asp-118. The Charge relay system role is filled by Ser-211.

This sequence belongs to the peptidase S1 family. Kallikrein subfamily.

The enzyme catalyses Preferential cleavage of Arg-|-Xaa bonds in small molecule substrates. Highly selective action to release kallidin (lysyl-bradykinin) from kininogen involves hydrolysis of Met-|-Xaa or Leu-|-Xaa.. Glandular kallikreins cleave Met-Lys and Arg-Ser bonds in kininogen to release Lys-bradykinin. The polypeptide is Kallikrein 1-related peptidase b22 (Klk1b22) (Mus musculus (Mouse)).